Reading from the N-terminus, the 140-residue chain is Large ribosomal subunit protein uL11 (140 aa).

It belongs to the universal ribosomal protein uL11 family. In terms of assembly, part of the ribosomal stalk of the 50S ribosomal subunit. Interacts with L10 and the large rRNA to form the base of the stalk. L10 forms an elongated spine to which L12 dimers bind in a sequential fashion forming a multimeric L10(L12)X complex. One or more lysine residues are methylated.

Its function is as follows. Forms part of the ribosomal stalk which helps the ribosome interact with GTP-bound translation factors. This chain is Large ribosomal subunit protein uL11, found in Caldanaerobacter subterraneus subsp. tengcongensis (strain DSM 15242 / JCM 11007 / NBRC 100824 / MB4) (Thermoanaerobacter tengcongensis).